The chain runs to 382 residues: Lipid-A-disaccharide synthase (382 aa).

This sequence belongs to the LpxB family.

It carries out the reaction 2-N,3-O-bis[(3R)-3-hydroxytetradecanoyl]-alpha-D-glucosaminyl 1-phosphate + UDP-2-N,3-O-bis[(3R)-3-hydroxytetradecanoyl]-alpha-D-glucosamine = lipid A disaccharide (E. coli) + UDP + H(+). The enzyme catalyses a lipid X + a UDP-2-N,3-O-bis[(3R)-3-hydroxyacyl]-alpha-D-glucosamine = a lipid A disaccharide + UDP + H(+). The protein operates within glycolipid biosynthesis; lipid IV(A) biosynthesis; lipid IV(A) from (3R)-3-hydroxytetradecanoyl-[acyl-carrier-protein] and UDP-N-acetyl-alpha-D-glucosamine: step 5/6. Condensation of UDP-2,3-diacylglucosamine and 2,3-diacylglucosamine-1-phosphate to form lipid A disaccharide, a precursor of lipid A, a phosphorylated glycolipid that anchors the lipopolysaccharide to the outer membrane of the cell. The sequence is that of Lipid-A-disaccharide synthase from Escherichia coli O7:K1 (strain IAI39 / ExPEC).